A 101-amino-acid chain; its full sequence is MEKSKRLFLKSKRSFRRRLPPIQSGDRIDYRNMSLISRFISEQGKILSRRVNRLTLKQQRLITIAIKQARILSLLPFLNNEKQFERSESTAGATGLRTINK.

The protein belongs to the bacterial ribosomal protein bS18 family. In terms of assembly, part of the 30S ribosomal subunit.

The protein resides in the plastid. It is found in the chloroplast. This Eucalyptus globulus subsp. globulus (Tasmanian blue gum) protein is Small ribosomal subunit protein bS18c.